Reading from the N-terminus, the 469-residue chain is Proline--tRNA ligase (469 aa).

The protein belongs to the class-II aminoacyl-tRNA synthetase family. ProS type 3 subfamily. In terms of assembly, homodimer.

It is found in the cytoplasm. The enzyme catalyses tRNA(Pro) + L-proline + ATP = L-prolyl-tRNA(Pro) + AMP + diphosphate. Its function is as follows. Catalyzes the attachment of proline to tRNA(Pro) in a two-step reaction: proline is first activated by ATP to form Pro-AMP and then transferred to the acceptor end of tRNA(Pro). This chain is Proline--tRNA ligase, found in Methanosphaera stadtmanae (strain ATCC 43021 / DSM 3091 / JCM 11832 / MCB-3).